The sequence spans 513 residues: NADH-quinone oxidoreductase chain 13 (513 aa).

The next 14 helical transmembrane spans lie at 3-23 (NLLS…ALFL), 34-54 (AKWL…FVLF), 81-101 (VDGI…LTIL), 112-132 (EYMI…TALD), 133-153 (LVLF…IIGI), 164-184 (FKFF…MIAM), 211-231 (MTVV…SFAV), 250-270 (PTAG…YGFL), 277-297 (FPVA…IAIV), 312-332 (VIAY…FAAN), 340-360 (IFQM…VGVI), 383-403 (AAVF…SGFV), 418-438 (WVAL…LWLY), and 463-483 (WVFI…RLVT).

Belongs to the complex I subunit 4 family. In terms of assembly, NDH-1 is composed of at least 14 different subunits, Nqo1 to Nqo14. The complex has a L-shaped structure, with the hydrophobic arm (subunits Nqo7, Nqo8, Nqo10 to Nqo14) embedded in the inner membrane and the hydrophilic peripheral arm (subunits Nqo1 to Nqo6, Nqo9) protruding into the bacterial cytoplasm. The hydrophilic domain contains all the redox centers.

The protein localises to the cell inner membrane. It catalyses the reaction a quinone + NADH + 5 H(+)(in) = a quinol + NAD(+) + 4 H(+)(out). Functionally, NDH-1 shuttles electrons from NADH, via FMN and iron-sulfur (Fe-S) centers, to quinones in the respiratory chain. The immediate electron acceptor for the enzyme in this species is believed to be ubiquinone. Couples the redox reaction to proton translocation (for every two electrons transferred, four hydrogen ions are translocated across the cytoplasmic membrane), and thus conserves the redox energy in a proton gradient. The sequence is that of NADH-quinone oxidoreductase chain 13 from Paracoccus denitrificans.